A 598-amino-acid polypeptide reads, in one-letter code: Insulin-like growth factor 2 mRNA-binding protein 1 (598 aa).

2 RRM domains span residues 2 to 75 and 81 to 156; these read NKLY…HSVP and RKLQ…YIPD. The interval 155–195 is disordered; sequence PDENSEVDSQRGPDNGRRPGYGPRGTSRQMSPGSGIPSKHQ. Residues 162 to 171 are compositionally biased toward basic and acidic residues; sequence DSQRGPDNGR. Serine 185 is subject to Phosphoserine. KH domains lie at 198–263 and 279–346; these read DIPL…CRMI and EVPL…EQEI. Phosphotyrosine is present on tyrosine 399. KH domains lie at 407-472 and 489-555; these read QETV…QGRI and KLET…QRKI. Residues 561-598 are disordered; that stretch reads QVKQQQKGGGMGTPQGPHPQGMTELGSPQGLAQEPRRK. 2 positions are modified to phosphothreonine: threonine 573 and threonine 583. Residues 574 to 583 show a composition bias toward low complexity; the sequence is PQGPHPQGMT. Serine 587 bears the Phosphoserine mark.

Belongs to the RRM IMP/VICKZ family. As to quaternary structure, component of the CRD-mediated complex.

The protein resides in the nucleus. Its subcellular location is the cytoplasm. The protein localises to the perinuclear region. It localises to the P-body. It is found in the stress granule. The protein resides in the cell projection. Its subcellular location is the growth cone. The protein localises to the filopodium. It localises to the lamellipodium. In terms of biological role, RNA-binding factor that recruits target transcripts to cytoplasmic protein-RNA complexes (mRNPs). This transcript 'caging' into mRNPs allows mRNA transport and transient storage. It also modulates the rate and location at which target transcripts encounter the translational apparatus and shields them from endonuclease attacks or microRNA-mediated degradation. Preferentially binds to N6-methyladenosine (m6A)-containing mRNAs and increases their stability. Plays a direct role in the transport and translation of transcripts required for axonal regeneration in adult sensory neurons. Regulates localized beta-actin/ACTB mRNA translation in polarized cells, a crucial process for cell migration and neurite outgrowth. Promotes the directed movement of cells by fine-tuning intracellular signaling networks and enhances the velocity of cell migration. The sequence is that of Insulin-like growth factor 2 mRNA-binding protein 1 (igf2bp1) from Danio rerio (Zebrafish).